Reading from the N-terminus, the 563-residue chain is Glucocorticoid modulatory element-binding protein 1 (563 aa).

A2 carries the N-acetylalanine modification. The 85-residue stretch at 72–156 folds into the SAND domain; sequence ASTIEANEDM…RKMMDSGQID (85 aa). Residue C103 coordinates Zn(2+). Positions 129, 133, 136, and 147 each coordinate DNA. The Zn(2+) site is built by H160, C164, and C168. A coiled-coil region spans residues 304-355; it reads MDTVKKVLDNRKNQVEQGEEQFLYTLTDLERQLEEQKKQAQDHRLKSQTVQN. Residues 360–385 form a disordered region; sequence PVSTPKPPKRPRLQRPASTTVLSPSP.

Homodimer, and heterodimer of GMEB1 and GMEB2. Interacts with TRIM63. Interacts with the glucocorticoid receptor (NR3C1) and NCOA2/TIF2. May interact with HSP27 and CREB-binding protein (CBP).

The protein resides in the nucleus. The protein localises to the cytoplasm. Its function is as follows. Trans-acting factor that binds to glucocorticoid modulatory elements (GME) present in the TAT (tyrosine aminotransferase) promoter and increases sensitivity to low concentrations of glucocorticoids. Also binds to the transferrin receptor promoter. The protein is Glucocorticoid modulatory element-binding protein 1 (GMEB1) of Bos taurus (Bovine).